Reading from the N-terminus, the 338-residue chain is Mitochondrial transcription factor 1 (338 aa).

Residues L23, D76, D100, and N136 each coordinate S-adenosyl-L-methionine.

Belongs to the class I-like SAM-binding methyltransferase superfamily. rRNA adenine N(6)-methyltransferase family.

Its subcellular location is the mitochondrion. Its function is as follows. Mitochondrial transcription factor that confers selective promoter recognition on the core subunit of the yeast mitochondrial RNA polymerase. Interacts with DNA in a non-specific manner. This Lachancea kluyveri (Yeast) protein is Mitochondrial transcription factor 1 (MTF1).